The sequence spans 206 residues: Small ribosomal subunit protein uS4 (206 aa).

An S4 RNA-binding domain is found at 96-156; sequence CRLDNVVYRM…EKAKNQLRIV (61 aa).

The protein belongs to the universal ribosomal protein uS4 family. Part of the 30S ribosomal subunit. Contacts protein S5. The interaction surface between S4 and S5 is involved in control of translational fidelity.

In terms of biological role, one of the primary rRNA binding proteins, it binds directly to 16S rRNA where it nucleates assembly of the body of the 30S subunit. With S5 and S12 plays an important role in translational accuracy. This chain is Small ribosomal subunit protein uS4, found in Pseudomonas savastanoi pv. phaseolicola (strain 1448A / Race 6) (Pseudomonas syringae pv. phaseolicola (strain 1448A / Race 6)).